The sequence spans 542 residues: Cytochrome P450 79B1 (542 aa).

A helical transmembrane segment spans residues 21 to 41 (FSNMYLLTTLQAFVAITLVML). Heme is bound at residue Cys-478.

The protein belongs to the cytochrome P450 family. Heme is required as a cofactor.

The protein resides in the membrane. In terms of biological role, converts tyrosine to para-hydrophenylacetaldoxime in para-hydroxybenzylglucosinolate biosynthesis. The polypeptide is Cytochrome P450 79B1 (CYP79B1) (Sinapis alba (White mustard)).